Consider the following 36-residue polypeptide: Photosystem II reaction center protein Y (36 aa).

Over 1-4 (MDTR) the chain is Lumenal. A helical transmembrane segment spans residues 5–23 (LIVIAAPVLVAASWALFNI). Topologically, residues 24 to 36 (GRLAIQQIQRLKR) are stromal.

It belongs to the PsbY family. As to quaternary structure, PSII is composed of 1 copy each of membrane proteins PsbA, PsbB, PsbC, PsbD, PsbE, PsbF, PsbH, PsbI, PsbJ, PsbK, PsbL, PsbM, PsbT, PsbX, PsbY, PsbZ, Psb30/Ycf12, at least 3 peripheral proteins of the oxygen-evolving complex and a large number of cofactors. It forms dimeric complexes.

It localises to the plastid. Its subcellular location is the chloroplast thylakoid membrane. Functionally, loosely associated component of the core of photosystem II (PSII), it is not always seen in crystals. PSII is a light-driven water plastoquinone oxidoreductase, using light energy to abstract electrons from H(2)O, generating a proton gradient subsequently used for ATP formation. The chain is Photosystem II reaction center protein Y from Phaeodactylum tricornutum (strain CCAP 1055/1).